The chain runs to 102 residues: MAGQKIRIRLKSYDHEVIDQSAKKIVETVTNAGATVVGPVPLPTEKNVYCVIRSPHKYKDSREHFEMRTHKRLIDIVDPTPKAVDSLMHIDLPADVNIEIKL.

Belongs to the universal ribosomal protein uS10 family. Part of the 30S ribosomal subunit.

Functionally, involved in the binding of tRNA to the ribosomes. The polypeptide is Small ribosomal subunit protein uS10 (Bifidobacterium animalis subsp. lactis (strain AD011)).